The following is a 61-amino-acid chain: SPbeta prophage-derived uncharacterized protein YotK (61 aa).

Positions 7 to 57 form a coiled coil; that stretch reads SIQTLLNKMDRQMKTVKEAIEEKDLQRAHRNLINLADNNEELMQEIRWVKK.

The chain is SPbeta prophage-derived uncharacterized protein YotK (yotK) from Bacillus subtilis (strain 168).